Reading from the N-terminus, the 102-residue chain is Large ribosomal subunit protein uL24 (102 aa).

The tract at residues 1 to 22 is disordered; sequence MHVKKGDTVQVMSGKDKGKQGV.

Belongs to the universal ribosomal protein uL24 family. In terms of assembly, part of the 50S ribosomal subunit.

Its function is as follows. One of two assembly initiator proteins, it binds directly to the 5'-end of the 23S rRNA, where it nucleates assembly of the 50S subunit. Functionally, one of the proteins that surrounds the polypeptide exit tunnel on the outside of the subunit. In Exiguobacterium sp. (strain ATCC BAA-1283 / AT1b), this protein is Large ribosomal subunit protein uL24.